The primary structure comprises 164 residues: CASP-like protein 1C2 (164 aa).

Residues 1–8 (MAVELKKV) lie on the Cytoplasmic side of the membrane. A helical membrane pass occupies residues 9–29 (FSTILRFLALAATVVAVIVMI). Residues 30–53 (RSHDSAIVLNLTFSAKYNNTPAFK) lie on the Extracellular side of the membrane. Residue N39 is glycosylated (N-linked (GlcNAc...) asparagine). Residues 54-74 (YFVIAEGIASVYTIIVIFLWS) traverse the membrane as a helical segment. Residues 75 to 80 (KGLLGR) are Cytoplasmic-facing. Residues 81–101 (LIVILDMVTTVLLTSSISAAL) form a helical membrane-spanning segment. Residues 102–129 (AIAQVGKKGNSHAGWLPVCGQVPKFCDQ) lie on the Extracellular side of the membrane. A helical transmembrane segment spans residues 130–150 (AIIALVAGFVAAIVYFMLLLC). Over 151 to 164 (SLHAVLTPIFAVKP) the chain is Cytoplasmic.

This sequence belongs to the Casparian strip membrane proteins (CASP) family. Homodimer and heterodimers.

It localises to the cell membrane. This chain is CASP-like protein 1C2, found in Ricinus communis (Castor bean).